The primary structure comprises 236 residues: Phosphoribosylaminoimidazole-succinocarboxamide synthase (236 aa).

This sequence belongs to the SAICAR synthetase family.

It carries out the reaction 5-amino-1-(5-phospho-D-ribosyl)imidazole-4-carboxylate + L-aspartate + ATP = (2S)-2-[5-amino-1-(5-phospho-beta-D-ribosyl)imidazole-4-carboxamido]succinate + ADP + phosphate + 2 H(+). The protein operates within purine metabolism; IMP biosynthesis via de novo pathway; 5-amino-1-(5-phospho-D-ribosyl)imidazole-4-carboxamide from 5-amino-1-(5-phospho-D-ribosyl)imidazole-4-carboxylate: step 1/2. This Campylobacter jejuni (strain RM1221) protein is Phosphoribosylaminoimidazole-succinocarboxamide synthase.